The following is a 478-amino-acid chain: Hexokinase (478 aa).

In terms of domain architecture, Hexokinase spans 21-465 (EYLLKELTEL…LGAGAAIIAA (445 aa)). The tract at residues 75–208 (TGKEMGDYLA…KVPIEVVALI (134 aa)) is hexokinase small subdomain. Lysine 111 is an ATP binding site. The segment at 151–177 (PLGFTFSYPASQGSINEGYLQRWTKGF) is glucose-binding. The hexokinase large subdomain stretch occupies residues 209–454 (NDTTGTLVAS…DPIVIVPAED (246 aa)).

The protein belongs to the hexokinase family. In terms of assembly, monomer.

The enzyme catalyses a D-hexose + ATP = a D-hexose 6-phosphate + ADP + H(+). It catalyses the reaction D-fructose + ATP = D-fructose 6-phosphate + ADP + H(+). The catalysed reaction is D-glucose + ATP = D-glucose 6-phosphate + ADP + H(+). Its pathway is carbohydrate metabolism; hexose metabolism. It functions in the pathway carbohydrate degradation; glycolysis; D-glyceraldehyde 3-phosphate and glycerone phosphate from D-glucose: step 1/4. Its function is as follows. Catalyzes the phosphorylation of hexose, such as D-glucose and D-fructose, to hexose 6-phosphate (D-glucose 6-phosphate and D-fructose 6-phosphate, respectively). Mediates the initial step of glycolysis by catalyzing phosphorylation of D-glucose to D-glucose 6-phosphate. The sequence is that of Hexokinase (HXK) from Schwanniomyces occidentalis (Yeast).